We begin with the raw amino-acid sequence, 443 residues long: Signal recognition particle 54 kDa protein (443 aa).

GTP is bound by residues 104–111 (GLQGSGKT), 184–188 (DTAGR), and 242–245 (TKLD).

The protein belongs to the GTP-binding SRP family. SRP54 subfamily. In terms of assembly, part of the signal recognition particle protein translocation system, which is composed of SRP and FtsY. Archaeal SRP consists of a 7S RNA molecule of 300 nucleotides and two protein subunits: SRP54 and SRP19.

It localises to the cytoplasm. The catalysed reaction is GTP + H2O = GDP + phosphate + H(+). In terms of biological role, involved in targeting and insertion of nascent membrane proteins into the cytoplasmic membrane. Binds to the hydrophobic signal sequence of the ribosome-nascent chain (RNC) as it emerges from the ribosomes. The SRP-RNC complex is then targeted to the cytoplasmic membrane where it interacts with the SRP receptor FtsY. This is Signal recognition particle 54 kDa protein from Methanosarcina barkeri (strain Fusaro / DSM 804).